We begin with the raw amino-acid sequence, 102 residues long: Large ribosomal subunit protein bL21 (102 aa).

It belongs to the bacterial ribosomal protein bL21 family. As to quaternary structure, part of the 50S ribosomal subunit. Contacts protein L20.

In terms of biological role, this protein binds to 23S rRNA in the presence of protein L20. The protein is Large ribosomal subunit protein bL21 of Staphylococcus haemolyticus (strain JCSC1435).